The following is a 360-amino-acid chain: Bifunctional protein FolD 4, chloroplastic (360 aa).

The transit peptide at 1–51 directs the protein to the chloroplast; it reads MASMMFTDCSSTTTSRLIHLNRSSGTFLLRQCVGQLRLQTTASGRGCCIRS. Ser52 carries the post-translational modification N-acetylserine.

Belongs to the tetrahydrofolate dehydrogenase/cyclohydrolase family. In terms of assembly, homodimer.

The protein resides in the plastid. Its subcellular location is the chloroplast. It catalyses the reaction (6R)-5,10-methylene-5,6,7,8-tetrahydrofolate + NADP(+) = (6R)-5,10-methenyltetrahydrofolate + NADPH. The enzyme catalyses (6R)-5,10-methenyltetrahydrofolate + H2O = (6R)-10-formyltetrahydrofolate + H(+). The protein operates within one-carbon metabolism; tetrahydrofolate interconversion. Catalyzes the oxidation of 5,10-methylenetetrahydrofolate to 5,10-methenyltetrahydrofolate and then the hydrolysis of 5,10-methenyltetrahydrofolate to 10-formyltetrahydrofolate. In Arabidopsis thaliana (Mouse-ear cress), this protein is Bifunctional protein FolD 4, chloroplastic (FOLD4).